Consider the following 529-residue polypeptide: G-protein coupled receptor 161 (529 aa).

Residues 1 to 30 (MSLNSSLSCRKELSNLTEEEGGEGGVIITQ) lie on the Extracellular side of the membrane. N-linked (GlcNAc...) asparagine glycosylation is found at N4 and N15. Residues 31 to 51 (FIAIIVITIFVCLGNLVIVVT) traverse the membrane as a helical segment. Topologically, residues 52–64 (LYKKSYLLTLSNK) are cytoplasmic. A helical transmembrane segment spans residues 65–85 (FVFSLTLSNFLLSVLVLPFVV). The Extracellular portion of the chain corresponds to 86–101 (TSSIRREWIFGVVWCN). A disulfide bond links C100 and C178. A helical membrane pass occupies residues 102–123 (FSALLYLLISSASMLTLGVIAI). The Cytoplasmic segment spans residues 124–143 (DRYYAVLYPMVYPMKITGNR). Residues 144–164 (AVMALVYIWLHSLIGCLPPLF) traverse the membrane as a helical segment. Residues 165–190 (GWSSVEFDEFKWMCVAAWHREPGYTA) are Extracellular-facing. Residues 191 to 211 (FWQIWCALFPFLVMLVCYGFI) traverse the membrane as a helical segment. Over 212-269 (FRVARVKARKVHCGTVVIVEEDAQRTGRKNSSTSTSSSGSRRNAFQGVVYSANQCKAL) the chain is Cytoplasmic. A helical transmembrane segment spans residues 270–290 (ITILVVLGAFMVTWGPYMVVI). Residues 291–306 (ASEALWGKSSVSPSLE) are Extracellular-facing. Residues 307 to 327 (TWATWLSFASAVCHPLIYGLW) traverse the membrane as a helical segment. At 328-529 (NKTVRKELLG…EGDVLAAEQR (202 aa)) the chain is on the cytoplasmic side.

The protein belongs to the G-protein coupled receptor 1 family.

The protein resides in the cell projection. The protein localises to the cilium membrane. It localises to the cell membrane. Functionally, key negative regulator of Shh signaling, which promotes the processing of GLI3 into GLI3R during neural tube development. Recruited by TULP3 and the IFT-A complex to primary cilia and acts as a regulator of the PKA-dependent basal repression machinery in Shh signaling by increasing cAMP levels, leading to promote the PKA-dependent processing of GLI3 into GLI3R and repress the Shh signaling. In presence of SHH, it is removed from primary cilia and is internalized into recycling endosomes, preventing its activity and allowing activation of the Shh signaling. Its ligand is unknown. The sequence is that of G-protein coupled receptor 161 (GPR161) from Homo sapiens (Human).